The primary structure comprises 148 residues: Urease accessory protein UreE (148 aa).

It belongs to the UreE family.

It is found in the cytoplasm. Its function is as follows. Involved in urease metallocenter assembly. Binds nickel. Probably functions as a nickel donor during metallocenter assembly. The chain is Urease accessory protein UreE from Halalkalibacterium halodurans (strain ATCC BAA-125 / DSM 18197 / FERM 7344 / JCM 9153 / C-125) (Bacillus halodurans).